We begin with the raw amino-acid sequence, 329 residues long: MGSLNSIAVLGGGAWGTALAQTAARAGRKVTLWEHDAGNAEHLIAARESRFLPGVRLEPSIQVTRDLAEAARADALLLVVPAQVLRQVVTSLQPLIAPRTPLVACAKGIEHGTHRFMTEIIAEAAPAAIPAILSGPSFAADVARGLPTAVTIAATDAACAQALAQAMNSGSFRPYHSTDVRGVELGGATKNVLAIAAGIVEGRQLGASALAAMTTRGFVELVRFGKAYGARIETMHGLSGLGDLTMCCSTPQSRNFSFGMALGRGEGIESAAHGKLAEGYYTAPVLLEMAQAKGIDMPISTAVAAVLGGKLSVDAAIEGLLTRPLKAEE.

NADPH is bound by residues Trp-15, His-35, and Lys-107. Residues Lys-107, Gly-135, and Ser-137 each coordinate sn-glycerol 3-phosphate. Position 139 (Ala-139) interacts with NADPH. Sn-glycerol 3-phosphate-binding residues include Lys-190, Asp-243, Ser-253, Arg-254, and Asn-255. Lys-190 (proton acceptor) is an active-site residue. Arg-254 lines the NADPH pocket. Residues Leu-276 and Glu-278 each coordinate NADPH.

Belongs to the NAD-dependent glycerol-3-phosphate dehydrogenase family.

Its subcellular location is the cytoplasm. The enzyme catalyses sn-glycerol 3-phosphate + NAD(+) = dihydroxyacetone phosphate + NADH + H(+). It carries out the reaction sn-glycerol 3-phosphate + NADP(+) = dihydroxyacetone phosphate + NADPH + H(+). Its pathway is membrane lipid metabolism; glycerophospholipid metabolism. Catalyzes the reduction of the glycolytic intermediate dihydroxyacetone phosphate (DHAP) to sn-glycerol 3-phosphate (G3P), the key precursor for phospholipid synthesis. In Rhodopseudomonas palustris (strain TIE-1), this protein is Glycerol-3-phosphate dehydrogenase [NAD(P)+].